The sequence spans 274 residues: Tryptase beta-2 (274 aa).

Residues 1–19 (MLKLLLLLALSPLASLVHA) form the signal peptide. The propeptide at 20 to 29 (APCPVKQRVG) is activation peptide. Residues 30–271 (IVGGREASES…YLDWIHRYVP (242 aa)) enclose the Peptidase S1 domain. A disulfide bond links cysteine 58 and cysteine 74. The Charge relay system role is filled by histidine 73. A Phosphotyrosine modification is found at tyrosine 96. N-linked (GlcNAc...) asparagine glycosylation occurs at asparagine 104. The active-site Charge relay system is the aspartate 120. Asparagine 131 carries N-linked (GlcNAc...) asparagine glycosylation. Intrachain disulfides connect cysteine 154–cysteine 229, cysteine 187–cysteine 210, and cysteine 219–cysteine 247. Serine 223 functions as the Charge relay system in the catalytic mechanism.

It belongs to the peptidase S1 family. Tryptase subfamily. Homotetramer. The active tetramer is converted to inactive monomers at neutral and acidic pH in the absence of heparin. Low concentrations of inactive monomers become active monomers at pH 6.0 in the presence of heparin. When the concentration of active monomers is higher, they convert to active monomers and then to active tetramers. These monomers are active and functionally distinct from the tetrameric enzyme. In contrast to the hidden active sites in the tetrameric form, the active site of the monomeric form is accessible for macromolecular proteins and inhibitors, e.g. fibrinogen which is a substrate for the monomeric but not for the tetrameric form. The monomeric form forms a complex with SERPINB6.

Its subcellular location is the secreted. The catalysed reaction is Preferential cleavage: Arg-|-Xaa, Lys-|-Xaa, but with more restricted specificity than trypsin.. Functionally, tryptase is the major neutral protease present in mast cells and is secreted upon the coupled activation-degranulation response of this cell type. Plays a role in innate immunity. This chain is Tryptase beta-2 (Tpsb2), found in Rattus norvegicus (Rat).